The primary structure comprises 195 residues: MLRKKFENTKIILASGSPRRQEFFKNLDLDFEVRLKEIEEIFPKTLQSLEITDYLAKLKASAFDGDLLQNELLVTSDTLVWLQNEALGKPKDYDDAFAMLQKLSNQTHEVITSVCFKTKNKTEIINDITQVTFGKLSDEAIKYYLDNYKPFDKAGSYGIQEWIGLIGITNIHGSYTNVVGLPTEKVYLYLLNHTF.

Residue Asp-77 is the Proton acceptor of the active site.

Belongs to the Maf family. YhdE subfamily. The cofactor is a divalent metal cation.

It localises to the cytoplasm. It carries out the reaction dTTP + H2O = dTMP + diphosphate + H(+). It catalyses the reaction UTP + H2O = UMP + diphosphate + H(+). Nucleoside triphosphate pyrophosphatase that hydrolyzes dTTP and UTP. May have a dual role in cell division arrest and in preventing the incorporation of modified nucleotides into cellular nucleic acids. The sequence is that of dTTP/UTP pyrophosphatase from Flavobacterium psychrophilum (strain ATCC 49511 / DSM 21280 / CIP 103535 / JIP02/86).